We begin with the raw amino-acid sequence, 618 residues long: V-type proton ATPase catalytic subunit A (618 aa).

251–258 (GAFGCGKT) is an ATP binding site.

It belongs to the ATPase alpha/beta chains family. V-ATPase is a heteromultimeric enzyme composed of a peripheral catalytic V1 complex (main components: subunits A, B, C, D, E, and F) attached to an integral membrane V0 proton pore complex (main component: the proteolipid protein).

It catalyses the reaction ATP + H2O + 4 H(+)(in) = ADP + phosphate + 5 H(+)(out). Catalytic subunit of the peripheral V1 complex of vacuolar ATPase. V-ATPase vacuolar ATPase is responsible for acidifying a variety of intracellular compartments in eukaryotic cells. The chain is V-type proton ATPase catalytic subunit A (vatA) from Dictyostelium discoideum (Social amoeba).